Reading from the N-terminus, the 446-residue chain is Anthranilate N-benzoyltransferase protein 2 (446 aa).

Residues His164 and Asp393 each act as proton acceptor in the active site.

The protein belongs to the plant acyltransferase family. N-terminus is blocked.

It carries out the reaction anthranilate + benzoyl-CoA = N-benzoylanthranilate + CoA. It participates in phytoalexin biosynthesis; methoxydianthramide B biosynthesis. Functionally, catalyzes the formation of N-benzoylanthranilate, in the course of methoxydianthramide B, a phytoalexin. Phytoalexins are produced in response to infection by parasites, and are essential for the expression of disease resistance. This Dianthus caryophyllus (Carnation) protein is Anthranilate N-benzoyltransferase protein 2 (HCBT2).